Reading from the N-terminus, the 360-residue chain is D-alanine--D-alanine ligase (360 aa).

An ATP-grasp domain is found at 146-352 (KLCAVQAGIH…FTELIDRLVR (207 aa)). An ATP-binding site is contributed by 179–234 (KKRFAPPFFVKPANLGSSVGIAKIHSFDELENALDEACRLDVKILVEKAIEGREVE). Positions 305, 319, and 321 each coordinate Mg(2+).

Belongs to the D-alanine--D-alanine ligase family. Requires Mg(2+) as cofactor. The cofactor is Mn(2+).

It localises to the cytoplasm. It carries out the reaction 2 D-alanine + ATP = D-alanyl-D-alanine + ADP + phosphate + H(+). The protein operates within cell wall biogenesis; peptidoglycan biosynthesis. Cell wall formation. This Chlorobium phaeobacteroides (strain BS1) protein is D-alanine--D-alanine ligase.